The sequence spans 799 residues: Protein-lysine N-methyltransferase SMYD4 (799 aa).

Position 112 to 114 (112 to 114 (RSA)) interacts with S-adenosyl-L-methionine. One can recognise an SET domain in the interval 233–570 (LSVSLCTHPL…KGQEILHCYG (338 aa)). Residues Cys296, Cys299, Cys309, Cys312, Cys318, Cys322, His331, and Cys335 each coordinate Zn(2+). The MYND-type zinc finger occupies 296-335 (CHRCLKHTLATVPCGSCSYAKYCSQECMQQAWDLYHSTEC). Residues 535-536 (NH), Tyr569, and Phe591 each bind S-adenosyl-L-methionine.

It belongs to the class V-like SAM-binding methyltransferase superfamily. Interacts (via MYND-type zinc finger) with HDAC1.

It localises to the nucleus. It is found in the cytoplasm. It carries out the reaction L-lysyl-[protein] + S-adenosyl-L-methionine = N(6)-methyl-L-lysyl-[protein] + S-adenosyl-L-homocysteine + H(+). Its function is as follows. Protein-lysine N-methyltransferase. Monomethylates PRMT5, modulating its transcriptional activity. May also act as a histone methyltransferase. Plays a critical role in cardiac development. Acts as a key epigenetic regulator of gene expression during cardiac development via its dual activities as a methyltransferase and negative regulator of HDAC1. The sequence is that of Protein-lysine N-methyltransferase SMYD4 (Smyd4) from Mus musculus (Mouse).